A 194-amino-acid polypeptide reads, in one-letter code: Holliday junction branch migration complex subunit RuvA (194 aa).

Positions 1-64 are domain I; it reads MISRLTGKLV…EDAHLLFGFA (64 aa). The interval 65 to 143 is domain II; sequence TAEERKTFRQ…AHTVTDGLFA (79 aa). Residues 144–147 are flexible linker; sequence AAPA. Positions 147–194 are domain III; that stretch reads AADETEDIVSTLLALGYSEREAKAAVKGVPEGTDVGEGVRLALKNLLK.

It belongs to the RuvA family. Homotetramer. Forms an RuvA(8)-RuvB(12)-Holliday junction (HJ) complex. HJ DNA is sandwiched between 2 RuvA tetramers; dsDNA enters through RuvA and exits via RuvB. An RuvB hexamer assembles on each DNA strand where it exits the tetramer. Each RuvB hexamer is contacted by two RuvA subunits (via domain III) on 2 adjacent RuvB subunits; this complex drives branch migration. In the full resolvosome a probable DNA-RuvA(4)-RuvB(12)-RuvC(2) complex forms which resolves the HJ.

Its subcellular location is the cytoplasm. Its function is as follows. The RuvA-RuvB-RuvC complex processes Holliday junction (HJ) DNA during genetic recombination and DNA repair, while the RuvA-RuvB complex plays an important role in the rescue of blocked DNA replication forks via replication fork reversal (RFR). RuvA specifically binds to HJ cruciform DNA, conferring on it an open structure. The RuvB hexamer acts as an ATP-dependent pump, pulling dsDNA into and through the RuvAB complex. HJ branch migration allows RuvC to scan DNA until it finds its consensus sequence, where it cleaves and resolves the cruciform DNA. This chain is Holliday junction branch migration complex subunit RuvA, found in Neisseria meningitidis serogroup C (strain 053442).